The following is an 84-amino-acid chain: Toxin BmKaTx16 (84 aa).

Residues M1–S19 form the signal peptide. The LCN-type CS-alpha/beta domain maps to R21–H83. 4 disulfide bridges follow: C31-C82, C35-C55, C41-C65, and C45-C67. Position 84 (R84) is a propeptide, removed by a carboxypeptidase.

Belongs to the long (4 C-C) scorpion toxin superfamily. Sodium channel inhibitor family. Alpha subfamily. As to expression, expressed by the venom gland.

It localises to the secreted. Alpha toxins bind voltage-independently at site-3 of sodium channels (Nav) and inhibit the inactivation of the activated channels, thereby blocking neuronal transmission. This chain is Toxin BmKaTx16, found in Olivierus martensii (Manchurian scorpion).